The following is a 359-amino-acid chain: NADH-quinone oxidoreductase subunit H (359 aa).

8 helical membrane-spanning segments follow: residues 16-36 (IWPA…CVLL), 94-114 (GLFV…WAVI), 129-149 (LLFL…AGWA), 167-187 (VSYE…SASL), 208-228 (FLSW…ISGL), 261-281 (FFLA…ILFL), 296-316 (IPGW…FLWV), and 331-351 (LGWK…GAWM).

Belongs to the complex I subunit 1 family. In terms of assembly, NDH-1 is composed of 14 different subunits. Subunits NuoA, H, J, K, L, M, N constitute the membrane sector of the complex.

The protein localises to the cell inner membrane. The catalysed reaction is a quinone + NADH + 5 H(+)(in) = a quinol + NAD(+) + 4 H(+)(out). NDH-1 shuttles electrons from NADH, via FMN and iron-sulfur (Fe-S) centers, to quinones in the respiratory chain. The immediate electron acceptor for the enzyme in this species is believed to be ubiquinone. Couples the redox reaction to proton translocation (for every two electrons transferred, four hydrogen ions are translocated across the cytoplasmic membrane), and thus conserves the redox energy in a proton gradient. This subunit may bind ubiquinone. The sequence is that of NADH-quinone oxidoreductase subunit H from Polaromonas sp. (strain JS666 / ATCC BAA-500).